The sequence spans 1104 residues: Protein KIBRA (1104 aa).

WW domains lie at 6 to 39 and 53 to 86; these read LPLP…DPRD and DELP…DPRV. Residues 107 to 193 are a coiled coil; the sequence is LSAQKEIYQV…ELQFKERGFQ (87 aa). At S141 the chain carries Phosphoserine. Disordered stretches follow at residues 429 to 449 and 509 to 547; these read SMQS…RGSL and TQKA…SPPC. Over residues 527–542 the composition is skewed to low complexity; that stretch reads TPRSMTSLSPRSSLSS. Phosphoserine is present on S535. Residue S542 is modified to Phosphoserine; by CDK1. The C2 domain occupies 659 to 782; that stretch reads GATRVQIALK…RSGERSTRWY (124 aa). The segment at 822 to 949 is disordered; it reads LEKRQEGRSS…DSSTLSKKPP (128 aa). The interval 836–1104 is interaction with histone H3; that stretch reads EGSWTYEEEA…NIPALSADDV (269 aa). Acidic residues predominate over residues 841-862; it reads YEEEASENEAVAEEEEEGEEDV. Phosphoserine occurs at positions 887, 891, and 919. Residues 916 to 930 are compositionally biased toward polar residues; that stretch reads IIRSKTFSPGPQSQY. T921 is modified (phosphothreonine). Phosphoserine; by CDK1 is present on S923. S939 is modified (phosphoserine). Interaction with PRKCZ regions lie at residues 945–988 and 948–967; these read SKKP…LDLQ and PPFV…RPSS. S967 and S970 each carry phosphoserine; by PKC/PRKCZ. Positions 994–1024 form a coiled coil; sequence HSQLTQEISVLKELKEHLEQAKNHGEKELPQ. The ADDV motif motif lies at 1102-1104; that stretch reads DDV.

This sequence belongs to the WWC family. KIBRA subfamily. Homodimer. Forms heterodimers with WWC2 and WWC3. Interacts with DDN. Interacts with DYNLL1 and histone H3. The interaction with DYNLL1 is mandatory for the recruitment and transactivation functions of ESR1 or DYNLL1 to the target chromatin and the interaction with histone H3 ensures proper regulatory interaction of WWC1-DYNLL1-ESR1 complexes with target chromatin. Interacts (via WW domains) with DDR1 (via PPxY motif) in a collagen-regulated manner. Interacts with PRKCZ (via the protein kinase domain). Forms a tripartite complex with DDR1 and PRKCZ, but predominantly in the absence of collagen. Interacts (via the ADDV motif) with PATJ (via PDZ domain 8). Interacts (via WW domains) with SYNPO (via PPxY motifs). Interacts with NF2 and SNX4. Interacts with CCDC141; retains AMPAR in the cytosol after internalization. Interacts with DLC1 and PRKCZ. Interacts (via WW domains) with LATS1 and LATS2. In terms of processing, phosphorylation at Ser-542 and Ser-923 by CDK1 in response to spindle damage stress regulates mitotic exit, these two sites are dephosphorylated by CDC14B. As to expression, mammary epithelium.

It is found in the cytoplasm. The protein resides in the perinuclear region. Its subcellular location is the nucleus. The protein localises to the cell projection. It localises to the ruffle membrane. It is found in the cytosol. In terms of biological role, regulator of the Hippo signaling pathway, also known as the Salvador-Warts-Hippo (SWH) pathway. Enhances phosphorylation of LATS1 and YAP1 and negatively regulates cell proliferation and organ growth due to a suppression of the transcriptional activity of YAP1, the major effector of the Hippo pathway. Along with NF2 can synergistically induce the phosphorylation of LATS1 and LATS2 and function in the regulation of Hippo signaling pathway. Acts as a transcriptional coactivator of ESR1 which plays an essential role in DYNLL1-mediated ESR1 transactivation. Modulates directional migration of podocytes. May be associated with memory performance. Regulates collagen-stimulated activation of the ERK/MAPK cascade. Plays an important role in regulating AMPA-selective glutamate receptors (AMPARs) trafficking. This Mus musculus (Mouse) protein is Protein KIBRA (Wwc1).